The following is a 2115-amino-acid chain: Non-reducing polyketide synthase PFUR17_0229 (2115 aa).

The N-terminal acylcarrier protein transacylase (SAT) domain (SAT) stretch occupies residues 8 to 246 (VLFGDQTVDP…ISLPITAAFH (239 aa)). A Ketosynthase family 3 (KS3) domain is found at 367–796 (SGDIAIVGVA…GGNTSLVLED (430 aa)). Active-site for beta-ketoacyl synthase activity residues include cysteine 539, histidine 674, and histidine 713. The tract at residues 895–1218 (IFAFTGQGAQ…SISNAYNSGA (324 aa)) is malonyl-CoA:ACP transacylase (MAT) domain. The tract at residues 1279–1592 (TTCLQKVESE…KRNILQSLLS (314 aa)) is product template (PT) domain. The interval 1282–1413 (LQKVESETFT…CTVMYGDGQQ (132 aa)) is N-terminal hotdog fold. Positions 1282-1588 (LQKVESETFT…FQKMKRNILQ (307 aa)) constitute a PKS/mFAS DH domain. Residue histidine 1315 is the Proton acceptor; for dehydratase activity of the active site. The segment at 1441–1588 (VHRLLKEMIY…FQKMKRNILQ (148 aa)) is C-terminal hotdog fold. Aspartate 1501 serves as the catalytic Proton donor; for dehydratase activity. The interval 1594–1613 (GHEETPPARPVPSKRTVQGS) is disordered. Positions 1626-1703 (KAASGGFSNI…QLRNFFLDKV (78 aa)) constitute a Carrier 1 domain. Serine 1663 is modified (O-(pantetheine 4'-phosphoryl)serine). Residues 1710–1742 (FDDEESEMSSSTAGSTPGSSTSHGNQNTTVTTP) form a disordered region. Residues 1718–1733 (SSSTAGSTPGSSTSHG) show a composition bias toward low complexity. The region spanning 1742–1819 (PAEPDVVAIL…DVQKALGVPS (78 aa)) is the Carrier 2 domain. Serine 1779 carries the post-translational modification O-(pantetheine 4'-phosphoryl)serine. The thioesterase (TE) domain stretch occupies residues 1861–2097 (LFLLPDGAGS…VVGGNHFSIM (237 aa)).

The cofactor is pantetheine 4'-phosphate.

The catalysed reaction is 6 malonyl-CoA + 2 acetyl-CoA + 5 H(+) = o-orsellinate depside + 6 CO2 + 8 CoA + H2O. Non-reducing polyketide synthase; part of a gene cluster that mediates the biosynthesis of a yet unidentified depside/depsidone compound. The first step in the pathway is performed by the PKS PFUR17_0229 that condenses 2 acetyl-CoA starter units with 6 malonyl-CoA units to produce lecanoric acid (LA), also known as orsellinate depside. The biosynthesis occurs via the formation of 2 orsellinate intermediates fused together by the C-terminal thioesterase (TE) domain that finally releases lecanoric acid. In addition to the PKS gene, the PFUR17 gene cluster contains closely linked genes encoding a cytochrome P-450 and a laccase (phenol oxidase), directly upstream and downstream respectively, so it is likely that lecanoric acid is an intermediate in a longer biosynthetic pathway. This chain is Non-reducing polyketide synthase PFUR17_0229, found in Pseudevernia furfuracea (Tree moss).